Reading from the N-terminus, the 819-residue chain is Transferrin 2 (819 aa).

The N-terminal stretch at 1-21 (MASSLVFVALVGALCFTLANA) is a signal peptide. The Transferrin-like 1 domain maps to 33 to 373 (MVWCTKSQAE…QYDQYRSERL (341 aa)). Cystine bridges form between C36-C78 and C46-C69. N-linked (GlcNAc...) asparagine glycans are attached at residues N48 and N66. 2 residues coordinate Fe(3+): D93 and Y121. Cystine bridges form between C147-C237, C190-C213, and C273-C287. Hydrogencarbonate is bound by residues A155 and G156. N-linked (GlcNAc...) asparagine glycosylation is present at N187. Position 231 (Y231) interacts with Fe(3+). Residues 325–361 (GTRDDQSRQGGQSFNSRNNINDQNAYGQFDNNDPYRT) are disordered. A compositionally biased stretch (polar residues) spans 332-361 (RQGGQSFNSRNNINDQNAYGQFDNNDPYRT). N-linked (GlcNAc...) asparagine glycosylation is present at N388. Residues 450-796 (MTLCVTSENE…FMRARRITDC (347 aa)) enclose the Transferrin-like 2 domain. Cystine bridges form between C453–C490 and C463–C481. Fe(3+) contacts are provided by D505 and Y533. Intrachain disulfides connect C557/C646, C599/C621, C618/C629, and C687/C701. 3 residues coordinate hydrogencarbonate: T559, A565, and G566. The N-linked (GlcNAc...) asparagine glycan is linked to N720. Residue C796 is the site of GPI-anchor amidated cysteine attachment. Residues 797–819 (YAGASQLALSVGLLLVGSLVAML) constitute a propeptide, removed in mature form.

This sequence belongs to the transferrin family. As to quaternary structure, forms a complex composed of septa junction proteins Nrx-IV/Nrx, Tsf2/MTf, Cont and Nrg during late embryogenesis.

The protein resides in the apicolateral cell membrane. Its subcellular location is the cell junction. It is found in the septate junction. Its function is as follows. Iron-binding protein and component of septate junctions that form the paracellular permeability barrier in epithelial tissues. In an iron-dependent manner, required for septate junction assembly during epithelial maturation in embryos and mature septa junctions stability. The protein is Transferrin 2 of Drosophila melanogaster (Fruit fly).